A 392-amino-acid chain; its full sequence is Phospho-N-acetylmuramoyl-pentapeptide-transferase (392 aa).

Transmembrane regions (helical) follow at residues 28-48 (RALMAAMTALLIGLLAGPFVI), 76-96 (TMGGVLILLAIGISTLLWFDL), 100-120 (FVWIVLLVTLGFGAIGWVDDW), 137-157 (YLWQSVVGLIAALYLVFSISE), 193-213 (ISYPLGVFGFVILTYLVIVGS), 225-245 (GLAIMPVVMVGSSLGVFAYVT), 262-282 (SGELLIFCAAMAGSGLAFLWF), 289-309 (VFMGDVGALALGAALGTIAVI), 314-334 (IVLAIMGGIFVVEALSVMLQV), and 369-389 (QVVVRFWIITMLLCLVGLSTL).

This sequence belongs to the glycosyltransferase 4 family. MraY subfamily. It depends on Mg(2+) as a cofactor.

The protein localises to the cell inner membrane. The enzyme catalyses UDP-N-acetyl-alpha-D-muramoyl-L-alanyl-gamma-D-glutamyl-meso-2,6-diaminopimeloyl-D-alanyl-D-alanine + di-trans,octa-cis-undecaprenyl phosphate = di-trans,octa-cis-undecaprenyl diphospho-N-acetyl-alpha-D-muramoyl-L-alanyl-D-glutamyl-meso-2,6-diaminopimeloyl-D-alanyl-D-alanine + UMP. Its pathway is cell wall biogenesis; peptidoglycan biosynthesis. Catalyzes the initial step of the lipid cycle reactions in the biosynthesis of the cell wall peptidoglycan: transfers peptidoglycan precursor phospho-MurNAc-pentapeptide from UDP-MurNAc-pentapeptide onto the lipid carrier undecaprenyl phosphate, yielding undecaprenyl-pyrophosphoryl-MurNAc-pentapeptide, known as lipid I. This chain is Phospho-N-acetylmuramoyl-pentapeptide-transferase, found in Polaromonas naphthalenivorans (strain CJ2).